A 536-amino-acid chain; its full sequence is Phosphoenolpyruvate carboxykinase (ATP) (536 aa).

The substrate site is built by arginine 61, tyrosine 195, and lysine 201. ATP contacts are provided by residues lysine 201, histidine 220, and glycine 236–threonine 244. Mn(2+) contacts are provided by lysine 201 and histidine 220. Residue aspartate 257 coordinates Mn(2+). Glutamate 285, arginine 322, and threonine 447 together coordinate ATP. Arginine 322 lines the substrate pocket.

The protein belongs to the phosphoenolpyruvate carboxykinase (ATP) family. The cofactor is Mn(2+).

The protein localises to the cytoplasm. The enzyme catalyses oxaloacetate + ATP = phosphoenolpyruvate + ADP + CO2. It functions in the pathway carbohydrate biosynthesis; gluconeogenesis. Involved in the gluconeogenesis. Catalyzes the conversion of oxaloacetate (OAA) to phosphoenolpyruvate (PEP) through direct phosphoryl transfer between the nucleoside triphosphate and OAA. The sequence is that of Phosphoenolpyruvate carboxykinase (ATP) from Rhizobium johnstonii (strain DSM 114642 / LMG 32736 / 3841) (Rhizobium leguminosarum bv. viciae).